We begin with the raw amino-acid sequence, 54 residues long: Preprotein translocase subunit SecG (54 aa).

Residues 1–31 (MSSGQNSGGLMSSAGLVRYFDAEDRNSIRID) lie on the Cytoplasmic side of the membrane. A helical membrane pass occupies residues 32–53 (PKTIVAFGVLFGVGVLVLNALA). Residue Ile54 is a topological domain, extracellular.

It belongs to the SEC61-beta family. Component of the protein translocase complex. Heterotrimer consisting of alpha (SecY), beta (SecG) and gamma (SecE) subunits. Can form oligomers of the heterotrimer.

It localises to the cell membrane. In terms of biological role, involved in protein export. The function of the beta subunit is unknown, but it may be involved in stabilization of the trimeric complex. This chain is Preprotein translocase subunit SecG, found in Haloquadratum walsbyi (strain DSM 16790 / HBSQ001).